A 252-amino-acid chain; its full sequence is Octanoyltransferase (252 aa).

Residues 1–21 (MPSAPAAPAAPAAPDAAASVA) show a composition bias toward low complexity. A disordered region spans residues 1-22 (MPSAPAAPAAPAAPDAAASVAP). A BPL/LPL catalytic domain is found at 56-237 (PDTDDEIWVV…RLIAHLDGAT (182 aa)). Residues 96-103 (RGGQITYH), 168-170 (ALG), and 181-183 (GLS) contribute to the substrate site. The active-site Acyl-thioester intermediate is Cys-199.

The protein belongs to the LipB family.

It localises to the cytoplasm. The enzyme catalyses octanoyl-[ACP] + L-lysyl-[protein] = N(6)-octanoyl-L-lysyl-[protein] + holo-[ACP] + H(+). It functions in the pathway protein modification; protein lipoylation via endogenous pathway; protein N(6)-(lipoyl)lysine from octanoyl-[acyl-carrier-protein]: step 1/2. In terms of biological role, catalyzes the transfer of endogenously produced octanoic acid from octanoyl-acyl-carrier-protein onto the lipoyl domains of lipoate-dependent enzymes. Lipoyl-ACP can also act as a substrate although octanoyl-ACP is likely to be the physiological substrate. The polypeptide is Octanoyltransferase (Burkholderia pseudomallei (strain 668)).